The primary structure comprises 189 residues: GTP cyclohydrolase 1 (189 aa).

Zn(2+) contacts are provided by cysteine 78, histidine 81, and cysteine 150.

It belongs to the GTP cyclohydrolase I family. In terms of assembly, toroid-shaped homodecamer, composed of two pentamers of five dimers.

It carries out the reaction GTP + H2O = 7,8-dihydroneopterin 3'-triphosphate + formate + H(+). It participates in cofactor biosynthesis; 7,8-dihydroneopterin triphosphate biosynthesis; 7,8-dihydroneopterin triphosphate from GTP: step 1/1. The chain is GTP cyclohydrolase 1 from Bacillus pumilus (strain SAFR-032).